The primary structure comprises 407 residues: Betaine--homocysteine S-methyltransferase 1 (407 aa).

The 304-residue stretch at 11–314 folds into the Hcy-binding domain; that stretch reads KGILERLNAG…YHIRAIAEEL (304 aa). 3 positions are modified to N6-succinyllysine: Lys40, Lys93, and Lys98. Cys217 lines the Zn(2+) pocket. Residues Lys232 and Lys241 each carry the N6-succinyllysine modification. Zn(2+) contacts are provided by Cys299 and Cys300. Ser330 is modified (phosphoserine). 2 positions are modified to N6-succinyllysine: Lys340 and Lys377.

As to quaternary structure, homotetramer. Zn(2+) serves as cofactor.

The protein resides in the cytoplasm. It is found in the cytosol. It localises to the nucleus. It catalyses the reaction L-homocysteine + glycine betaine = N,N-dimethylglycine + L-methionine. The protein operates within amine and polyamine degradation; betaine degradation; sarcosine from betaine: step 1/2. Its pathway is amino-acid biosynthesis; L-methionine biosynthesis via de novo pathway; L-methionine from L-homocysteine (BhmT route): step 1/1. Functionally, involved in the regulation of homocysteine metabolism. Converts betaine and homocysteine to dimethylglycine and methionine, respectively. This reaction is also required for the irreversible oxidation of choline. This Mus musculus (Mouse) protein is Betaine--homocysteine S-methyltransferase 1 (Bhmt).